Here is a 255-residue protein sequence, read N- to C-terminus: Cytochrome c oxidase subunit 3 (255 aa).

7 consecutive transmembrane segments (helical) span residues 12–29 (INIINISETLYLFYSTGL), 57–77 (LKYLSVGEFFINSLTIFINGI), 91–111 (IFGMFIFSEIMVFSTFIWGFF), 126–146 (LEAFLQISDVLNAGSILISLI), 155–175 (YFEVDYMLERLILIGFIFLSF), 196–216 (FNVLTGLHSLHVYVGGIFALM), and 235–255 (GMYWHFVEIIWIALTMLLFLL).

This sequence belongs to the cytochrome c oxidase subunit 3 family. As to quaternary structure, component of the cytochrome c oxidase (complex IV, CIV), a multisubunit enzyme composed of a catalytic core of 3 subunits and several supernumerary subunits. The complex exists as a monomer or a dimer and forms supercomplexes (SCs) in the inner mitochondrial membrane with ubiquinol-cytochrome c oxidoreductase (cytochrome b-c1 complex, complex III, CIII).

Its subcellular location is the mitochondrion inner membrane. It carries out the reaction 4 Fe(II)-[cytochrome c] + O2 + 8 H(+)(in) = 4 Fe(III)-[cytochrome c] + 2 H2O + 4 H(+)(out). In terms of biological role, component of the cytochrome c oxidase, the last enzyme in the mitochondrial electron transport chain which drives oxidative phosphorylation. The respiratory chain contains 3 multisubunit complexes succinate dehydrogenase (complex II, CII), ubiquinol-cytochrome c oxidoreductase (cytochrome b-c1 complex, complex III, CIII) and cytochrome c oxidase (complex IV, CIV), that cooperate to transfer electrons derived from NADH and succinate to molecular oxygen, creating an electrochemical gradient over the inner membrane that drives transmembrane transport and the ATP synthase. Cytochrome c oxidase is the component of the respiratory chain that catalyzes the reduction of oxygen to water. Electrons originating from reduced cytochrome c in the intermembrane space (IMS) are transferred via the dinuclear copper A center (CU(A)) of subunit 2 and heme A of subunit 1 to the active site in subunit 1, a binuclear center (BNC) formed by heme A3 and copper B (CU(B)). The BNC reduces molecular oxygen to 2 water molecules using 4 electrons from cytochrome c in the IMS and 4 protons from the mitochondrial matrix. In Theileria annulata, this protein is Cytochrome c oxidase subunit 3 (MT-CO3).